An 850-amino-acid polypeptide reads, in one-letter code: Endoribonuclease ysh-1 (850 aa).

His83, His85, Asp87, His88, His173, and Asp194 together coordinate Zn(2+). Catalysis depends on His442, which acts as the Proton donor. His464 provides a ligand contact to Zn(2+). Disordered stretches follow at residues 685–708 (VKRSATKNPHTHSPLPADKNPHSH) and 732–784 (SPIV…EQQL). Residues 744–754 (PTTKAITSPSE) show a composition bias toward polar residues. Residues 755–766 (ETAKSSDVKSDA) show a composition bias toward basic and acidic residues. The span at 767 to 781 (DADASMDVSEEDEDE) shows a compositional bias: acidic residues.

It belongs to the metallo-beta-lactamase superfamily. RNA-metabolizing metallo-beta-lactamase-like family. CPSF2/YSH1 subfamily.

Its subcellular location is the nucleus. Component of the cleavage factor I (CF I) involved in pre-mRNA 3'-end processing. In Neurospora crassa (strain ATCC 24698 / 74-OR23-1A / CBS 708.71 / DSM 1257 / FGSC 987), this protein is Endoribonuclease ysh-1 (ysh-1).